The following is a 547-amino-acid chain: Putative nitric oxide synthase (547 aa).

Positions 24–40 are enriched in low complexity; sequence QLAPNPSSFSPTRAAST. 2 disordered regions span residues 24 to 57 and 72 to 91; these read QLAPNPSSFSPTRAASTAPPPPEGAGPAAPSRGD and VLAPEDAERRRRRREKRKAL. Residues 81-91 are compositionally biased toward basic residues; the sequence is RRRRREKRKAL. A CP-type G domain is found at 167-343; the sequence is ADQLRDKLSY…LYDTPGVHLH (177 aa).

It belongs to the TRAFAC class YlqF/YawG GTPase family. NOA1 subfamily.

The catalysed reaction is 2 L-arginine + 3 NADPH + 4 O2 + H(+) = 2 L-citrulline + 2 nitric oxide + 3 NADP(+) + 4 H2O. Functionally, produces nitric oxide (NO) which is a messenger molecule involved in hormonal signaling and defense responses in plant. The protein is Putative nitric oxide synthase of Oryza sativa subsp. japonica (Rice).